A 298-amino-acid polypeptide reads, in one-letter code: Putative insertion sequence ATP-binding protein y4iQ/y4nD/y4sD (298 aa).

114–121 lines the ATP pocket; that stretch reads GPPGGGKS. The tract at residues 276 to 298 is disordered; that stretch reads RQSEHDETLASDNQHDTFMPTAT.

It belongs to the IS21/IS1162 putative ATP-binding protein family.

This Sinorhizobium fredii (strain NBRC 101917 / NGR234) protein is Putative insertion sequence ATP-binding protein y4iQ/y4nD/y4sD.